Reading from the N-terminus, the 319-residue chain is Malate dehydrogenase (319 aa).

NAD(+) contacts are provided by residues 10–15 (GAGNIG) and Asp34. Arg83 and Arg89 together coordinate substrate. NAD(+)-binding positions include Asn96 and 119–121 (ITN). Residues Asn121 and Arg152 each coordinate substrate. Residue His176 is the Proton acceptor of the active site.

This sequence belongs to the LDH/MDH superfamily. MDH type 3 family.

The catalysed reaction is (S)-malate + NAD(+) = oxaloacetate + NADH + H(+). Catalyzes the reversible oxidation of malate to oxaloacetate. In Francisella philomiragia subsp. philomiragia (strain ATCC 25017 / CCUG 19701 / FSC 153 / O#319-036), this protein is Malate dehydrogenase.